We begin with the raw amino-acid sequence, 632 residues long: Protein EAP1 (632 aa).

3 disordered regions span residues 1-80 (MELN…KKNK), 149-204 (MGPP…DDEE), and 248-313 (KSKG…PSLS). Polar residues-rich tracts occupy residues 7-38 (SIIS…SNLF) and 54-69 (VESS…ATSG). S30 carries the post-translational modification Phosphoserine. A phosphoserine mark is found at S281 and S282. The span at 288-298 (NLKRQDKKEES) shows a compositional bias: basic and acidic residues. Phosphoserine occurs at positions 327 and 344. The disordered stretch occupies residues 347-378 (SLPSLDNNNQVPSSNVSVVNNDGNSTPHQSGS). The span at 353-371 (NNNQVPSSNVSVVNNDGNS) shows a compositional bias: low complexity. At S387 the chain carries Phosphoserine. Disordered stretches follow at residues 429–541 (QHPP…PPPP) and 587–632 (QGNF…KNIK). 440–447 (GLLNKGKS) provides a ligand contact to ATP. Pro residues predominate over residues 474–486 (PNFPQRMMPPPPG). Basic and acidic residues predominate over residues 492-505 (KDSKDVNKKEDRQL). 3 stretches are compositionally biased toward polar residues: residues 507 to 516 (QNKNPNGTRN), 590 to 603 (FPPN…SNSP), and 610 to 621 (INANGKNVTNQL).

As to quaternary structure, interacts with SMY2, SYH1 and eIF4E.

It is found in the cytoplasm. Functionally, can regulate translation through binding to eIF4E. Competes with eIF4G and p20 for binding to eIF4E in vivo and inhibits cap-dependent translation in vitro. Plays a role in cell growth and is implicated in the TOR signaling cascade. Functions independently of eIF4E to maintain genetic stability and to attenuate GCN4 translation upon TOR inactivation. The polypeptide is Protein EAP1 (EAP1) (Saccharomyces cerevisiae (strain ATCC 204508 / S288c) (Baker's yeast)).